The following is a 256-amino-acid chain: Imidazole glycerol phosphate synthase subunit HisF (256 aa).

Active-site residues include Asp12 and Asp131.

This sequence belongs to the HisA/HisF family. Heterodimer of HisH and HisF.

The protein localises to the cytoplasm. The enzyme catalyses 5-[(5-phospho-1-deoxy-D-ribulos-1-ylimino)methylamino]-1-(5-phospho-beta-D-ribosyl)imidazole-4-carboxamide + L-glutamine = D-erythro-1-(imidazol-4-yl)glycerol 3-phosphate + 5-amino-1-(5-phospho-beta-D-ribosyl)imidazole-4-carboxamide + L-glutamate + H(+). Its pathway is amino-acid biosynthesis; L-histidine biosynthesis; L-histidine from 5-phospho-alpha-D-ribose 1-diphosphate: step 5/9. IGPS catalyzes the conversion of PRFAR and glutamine to IGP, AICAR and glutamate. The HisF subunit catalyzes the cyclization activity that produces IGP and AICAR from PRFAR using the ammonia provided by the HisH subunit. The protein is Imidazole glycerol phosphate synthase subunit HisF of Pseudomonas putida (strain ATCC 700007 / DSM 6899 / JCM 31910 / BCRC 17059 / LMG 24140 / F1).